A 393-amino-acid polypeptide reads, in one-letter code: Digeranylgeranylglycerophospholipid reductase 2 (393 aa).

FAD-binding residues include D33, C44, A45, G47, R100, A124, D280, G292, and I293.

It belongs to the geranylgeranyl reductase family. DGGGPL reductase subfamily. FAD is required as a cofactor.

The enzyme catalyses a 2,3-bis-O-phytanyl-sn-glycerol 1-phospholipid + 8 A = a 2,3-bis-O-(geranylgeranyl)-sn-glycerol 1-phospholipid + 8 AH2. The catalysed reaction is 2,3-bis-O-(phytanyl)-sn-glycerol 1-phosphate + 8 A = 2,3-bis-O-(geranylgeranyl)-sn-glycerol 1-phosphate + 8 AH2. It catalyses the reaction CDP-2,3-bis-O-(geranylgeranyl)-sn-glycerol + 8 AH2 = CDP-2,3-bis-O-(phytanyl)-sn-glycerol + 8 A. It carries out the reaction archaetidylserine + 8 AH2 = 2,3-bis-O-phytanyl-sn-glycero-3-phospho-L-serine + 8 A. The protein operates within membrane lipid metabolism; glycerophospholipid metabolism. Is involved in the reduction of 2,3-digeranylgeranylglycerophospholipids (unsaturated archaeols) into 2,3-diphytanylglycerophospholipids (saturated archaeols) in the biosynthesis of archaeal membrane lipids. Catalyzes the formation of archaetidic acid (2,3-di-O-phytanyl-sn-glyceryl phosphate) from 2,3-di-O-geranylgeranylglyceryl phosphate (DGGGP) via the hydrogenation of each double bond of the isoprenoid chains. Is also probably able to reduce double bonds of geranyl groups in CDP-2,3-bis-O-(geranylgeranyl)-sn-glycerol and archaetidylserine, thus acting at various stages in the biosynthesis of archaeal membrane lipids. This Methanosphaera stadtmanae (strain ATCC 43021 / DSM 3091 / JCM 11832 / MCB-3) protein is Digeranylgeranylglycerophospholipid reductase 2.